A 504-amino-acid polypeptide reads, in one-letter code: MKAAYTAYRCLTKDLEGCAMNPELTMESLGTLHGPAGGGSGGGGGGGGGGGGGGPGHEQELLASPSPHHAGRGAAGSLRGPPPPPTAHQELGTAAAAAAAASRSAMVTSMASILDGGDYRPELSIPLHHAMSMSCDSSPPGMGMSNTYTTLTPLQPLPPISTVSDKFHHPHPHHHPHHHHHHHHQRLSGNVSGSFTLMRDERGLPAMNNLYSPYKEMPGMSQSLSPLAATPLGNGLGGLHNAQQSLPNYGPPGHDKMLSPNFDAHHTAMLTRGEQHLSRGLGTPPAAMMSHLNGLHHPGHTQSHGPVLAPSRERPPSSSSGSQVATSGQLEEINTKEVAQRITAELKRYSIPQAIFAQRVLCRSQGTLSDLLRNPKPWSKLKSGRETFRRMWKWLQEPEFQRMSALRLAACKRKEQEPNKDRNNSQKKSRLVFTDLQRRTLFAIFKENKRPSKEMQITISQQLGLELTTVSNFFMNARRRSLEKWQDDLSTGGSSSTSSTCTKA.

Disordered regions lie at residues 29–95 (LGTL…GTAA), 166–189 (KFHHPHPHHHPHHHHHHHHQRLSG), 274–332 (EQHL…QLEE), and 485–504 (WQDDLSTGGSSSTSSTCTKA). Residues 35 to 56 (PAGGGSGGGGGGGGGGGGGGPG) are compositionally biased toward gly residues. A compositionally biased stretch (basic residues) spans 168–186 (HHPHPHHHPHHHHHHHHQR). The segment at residues 324–410 (VATSGQLEEI…QRMSALRLAA (87 aa)) is a DNA-binding region (CUT). Residues 426-485 (QKKSRLVFTDLQRRTLFAIFKENKRPSKEMQITISQQLGLELTTVSNFFMNARRRSLEKW) constitute a DNA-binding region (homeobox). A compositionally biased stretch (low complexity) spans 490–504 (STGGSSSTSSTCTKA).

The protein belongs to the CUT homeobox family.

The protein localises to the nucleus. Its function is as follows. Transcriptional activator. Activates the transcription of a number of liver genes such as HNF3B. The sequence is that of One cut domain family member 2 (ONECUT2) from Homo sapiens (Human).